Here is a 163-residue protein sequence, read N- to C-terminus: 3-isopropylmalate dehydratase small subunit (163 aa).

Belongs to the LeuD family. LeuD type 2 subfamily. As to quaternary structure, heterodimer of LeuC and LeuD.

The enzyme catalyses (2R,3S)-3-isopropylmalate = (2S)-2-isopropylmalate. The protein operates within amino-acid biosynthesis; L-leucine biosynthesis; L-leucine from 3-methyl-2-oxobutanoate: step 2/4. Catalyzes the isomerization between 2-isopropylmalate and 3-isopropylmalate, via the formation of 2-isopropylmaleate. This is 3-isopropylmalate dehydratase small subunit from Endomicrobium trichonymphae.